The primary structure comprises 96 residues: Protein Vpr (96 aa).

The homooligomerization stretch occupies residues 1–42; that stretch reads MEQAPEDQGPQREPHNEWTLELLEELKNEAVRHFPRIWLHGL. Ser-79, Ser-94, and Ser-96 each carry phosphoserine; by host.

It belongs to the HIV-1 VPR protein family. As to quaternary structure, homooligomer, may form homodimer. Interacts with p6-gag region of the Pr55 Gag precursor protein through a (Leu-X-X)4 motif near the C-terminus of the P6gag protein. Interacts with host UNG. May interact with host RAD23A/HHR23A. Interacts with host VPRBP/DCAF1, leading to hijack the CUL4A-RBX1-DDB1-DCAF1/VPRBP complex, mediating ubiquitination of host proteins such as TERT and ZGPAT and arrest of the cell cycle in G2 phase. Post-translationally, phosphorylated on several residues by host. These phosphorylations regulate VPR activity for the nuclear import of the HIV-1 pre-integration complex.

It localises to the virion. The protein resides in the host nucleus. It is found in the host extracellular space. Its function is as follows. During virus entry, plays a role in the transport of the viral pre-integration (PIC) complex to the host nucleus. This function is crucial for viral infection of non-dividing macrophages. May act directly at the nuclear pore complex, by binding nucleoporins phenylalanine-glycine (FG)-repeat regions. In terms of biological role, during virus replication, may deplete host UNG protein, and incude G2-M cell cycle arrest. Acts by targeting specific host proteins for degradation by the 26S proteasome, through association with the cellular CUL4A-DDB1 E3 ligase complex by direct interaction with host VPRPB/DCAF-1. Cell cycle arrest reportedly occurs within hours of infection and is not blocked by antiviral agents, suggesting that it is initiated by the VPR carried into the virion. Additionally, VPR induces apoptosis in a cell cycle dependent manner suggesting that these two effects are mechanistically linked. Detected in the serum and cerebrospinal fluid of AIDS patient, VPR may also induce cell death to bystander cells. This Human immunodeficiency virus type 1 group M subtype B (isolate BRU/LAI) (HIV-1) protein is Protein Vpr.